Here is a 107-residue protein sequence, read N- to C-terminus: High mobility group protein HMG-I/HMG-Y (107 aa).

Residues 1–13 (MSESVSKSSQPLA) show a composition bias toward polar residues. The disordered stretch occupies residues 1–107 (MSESVSKSSQ…ISQESSEEEQ (107 aa)). Serine 2 is modified (N-acetylserine). Residue lysine 7 is modified to N6-acetyllysine. Serine 8 carries the post-translational modification ADP-ribosylserine. An ADP-ribosylserine; alternate modification is found at serine 9. A Phosphoserine; alternate modification is found at serine 9. The residue at position 15 (lysine 15) is an N6-acetyllysine; alternate. Residue lysine 15 forms a Glycyl lysine isopeptide (Lys-Gly) (interchain with G-Cter in SUMO2); alternate linkage. Residues 15–24 (KQEKDGTEKR) show a composition bias toward basic and acidic residues. The a.T hook 1 DNA-binding region spans 21-31 (TEKRGRGRPRK). Residue arginine 26 is modified to Asymmetric dimethylarginine; alternate. Arginine 26 bears the Omega-N-methylarginine; alternate mark. Position 26 is a symmetric dimethylarginine; alternate (arginine 26). Position 36 is a phosphoserine; by HIPK2 and CDC2 (serine 36). At threonine 39 the chain carries Phosphothreonine. A phosphoserine mark is found at serine 44 and serine 49. A Phosphothreonine; by HIPK2 and CDC2 modification is found at threonine 53. 2 consecutive DNA-binding regions (a.T hook) follow at residues 53 to 63 (TPKRPRGRPKG) and 78 to 89 (TPGRKPRGRPKK). An interaction with HIPK2 region spans residues 53-77 (TPKRPRGRPKGSKNKGTAKTRKVTT). Over residues 55-74 (KRPRGRPKGSKNKGTAKTRK) the composition is skewed to basic residues. Residues arginine 58 and arginine 60 each carry the asymmetric dimethylarginine; by PRMT6; alternate modification. 2 positions are modified to omega-N-methylarginine; by PRMT6; alternate: arginine 58 and arginine 60. The residue at position 78 (threonine 78) is a Phosphothreonine; by HIPK2 and CDC2. Positions 93 to 107 (EEEEGISQESSEEEQ) are enriched in acidic residues. Phosphoserine is present on residues serine 99, serine 102, and serine 103.

Belongs to the HMGA family. In terms of assembly, interacts with HIPK2. Isoforms HMG-I and HMG-Y can be phosphorylated by HIPK2. Phosphorylation may modulate DNA-binding affinity. In terms of processing, methylation at Arg-58 is mutually exclusive with methylation at Arg-60.

The protein resides in the nucleus. It localises to the chromosome. In terms of biological role, HMG-I/Y bind preferentially to the minor groove of A+T rich regions in double-stranded DNA. It is suggested that these proteins could function in nucleosome phasing and in the 3'-end processing of mRNA transcripts. They are also involved in the transcription regulation of genes containing, or in close proximity to A+T-rich regions. This is High mobility group protein HMG-I/HMG-Y (Hmga1) from Rattus norvegicus (Rat).